The sequence spans 265 residues: GTP cyclohydrolase FolE2 (265 aa).

Belongs to the GTP cyclohydrolase IV family.

The enzyme catalyses GTP + H2O = 7,8-dihydroneopterin 3'-triphosphate + formate + H(+). It functions in the pathway cofactor biosynthesis; 7,8-dihydroneopterin triphosphate biosynthesis; 7,8-dihydroneopterin triphosphate from GTP: step 1/1. In terms of biological role, converts GTP to 7,8-dihydroneopterin triphosphate. This is GTP cyclohydrolase FolE2 from Bordetella petrii (strain ATCC BAA-461 / DSM 12804 / CCUG 43448).